The chain runs to 219 residues: RNA chaperone ProQ (219 aa).

The disordered stretch occupies residues 102 to 160 (TLKESQDKAKAKRAERSKDEGDAADKAPRKPKRKPQPQARRDAKPAAKDKPKAAPKAPA). Composition is skewed to basic and acidic residues over residues 105–129 (ESQDKAKAKRAERSKDEGDAADKAP) and 140–153 (ARRDAKPAAKDKPK).

It belongs to the ProQ family.

It localises to the cytoplasm. RNA chaperone with significant RNA binding, RNA strand exchange and RNA duplexing activities. This is RNA chaperone ProQ from Shewanella amazonensis (strain ATCC BAA-1098 / SB2B).